Reading from the N-terminus, the 115-residue chain is Ribonuclease P protein component (115 aa).

The protein belongs to the RnpA family. Consists of a catalytic RNA component (M1 or rnpB) and a protein subunit.

It catalyses the reaction Endonucleolytic cleavage of RNA, removing 5'-extranucleotides from tRNA precursor.. RNaseP catalyzes the removal of the 5'-leader sequence from pre-tRNA to produce the mature 5'-terminus. It can also cleave other RNA substrates such as 4.5S RNA. The protein component plays an auxiliary but essential role in vivo by binding to the 5'-leader sequence and broadening the substrate specificity of the ribozyme. This Macrococcus caseolyticus (strain JCSC5402) (Macrococcoides caseolyticum) protein is Ribonuclease P protein component.